A 134-amino-acid chain; its full sequence is Photosystem II assembly factor lipoprotein Psb27 (134 aa).

The first 21 residues, 1-21 (MKRFWAMVCALFLSVSLLLTS), serve as a signal peptide directing secretion. The N-palmitoyl cysteine moiety is linked to residue C22. The S-diacylglycerol cysteine moiety is linked to residue C22.

This sequence belongs to the Psb27 family. As to quaternary structure, part of a photosystem II (PSII) assembly intermediate complex PSII-I; crystallized from a strain deleted of psbJ, it forms monomeric PSII before addition of the oxygen evolving complex. PSII-I includes 3 assembly factors not found in mature PSII (Psb27, Psb28 and Psb34). Binds to the lumenal side of PSII, adjacent to the CP43 (psbC) subunit.

The protein localises to the cellular thylakoid membrane. Its function is as follows. Plays a role in the repair and/or biogenesis of the calcium-manganese-oxide cluster on the lumenal face of the thylakoid membrane. Its presence in a photosystem II (PSII) preparation prevents binding of other extrinsic subunits PsbO, PsbU and PsbV, and thus assembly of calcium-manganese-oxide cluster. Psb27-containing complexes lack oxygen evolving activity and an oxidizable calcium-manganese-oxide cluster, but have a normal reaction center. This Thermosynechococcus vestitus (strain NIES-2133 / IAM M-273 / BP-1) protein is Photosystem II assembly factor lipoprotein Psb27.